Reading from the N-terminus, the 90-residue chain is Secretory calcium-binding phosphoprotein proline-glutamine-rich 1 (90 aa).

The first 15 residues, 1–15 (MQLFLLAALLSAAAA), serve as a signal peptide directing secretion.

In terms of tissue distribution, expressed in enamel organ.

The protein resides in the secreted. Functionally, tooth-associated epithelia protein that may participate in structuring the basal lamina at cell-tooth interface. This is Secretory calcium-binding phosphoprotein proline-glutamine-rich 1 from Mus musculus (Mouse).